The following is a 123-amino-acid chain: MPPKVSGKAAKKAGKAQKNITKGDKKKNRKRKESYAIYIYKVLKQVHPDTGISSKAMSIMNSFVNDIFERIASEASRLAHYNKRSTITSREIQTAVRLLLPGELAKHAVSEGTKAVTKYTSSK.

The segment at 1 to 30 (MPPKVSGKAAKKAGKAQKNITKGDKKKNRK) is disordered. Ser110 is a glycosylation site (O-linked (GlcNAc) serine). Lys118 is covalently cross-linked (Glycyl lysine isopeptide (Lys-Gly) (interchain with G-Cter in ubiquitin)).

This sequence belongs to the histone H2B family. The nucleosome is a histone octamer containing two molecules each of H2A, H2B, H3 and H4 assembled in one H3-H4 heterotetramer and two H2A-H2B heterodimers. The octamer wraps approximately 147 bp of DNA. In terms of processing, monoubiquitination of Lys-118 gives a specific tag for epigenetic transcriptional activation and is also prerequisite for histone H3 'Lys-4' and 'Lys-79' methylation. Post-translationally, glcNAcylation at Ser-110 promotes monoubiquitination of Lys-118. It fluctuates in response to extracellular glucose, and associates with transcribed genes.

The protein localises to the nucleus. The protein resides in the chromosome. In terms of biological role, core component of nucleosome. Nucleosomes wrap and compact DNA into chromatin, limiting DNA accessibility to the cellular machineries which require DNA as a template. Histones thereby play a central role in transcription regulation, DNA repair, DNA replication and chromosomal stability. DNA accessibility is regulated via a complex set of post-translational modifications of histones, also called histone code, and nucleosome remodeling. The sequence is that of Histone H2B.1/H2B.2 from Tigriopus californicus (Marine copepod).